The chain runs to 206 residues: Protein GrpE (206 aa).

Belongs to the GrpE family. In terms of assembly, homodimer.

The protein resides in the cytoplasm. Participates actively in the response to hyperosmotic and heat shock by preventing the aggregation of stress-denatured proteins, in association with DnaK and GrpE. It is the nucleotide exchange factor for DnaK and may function as a thermosensor. Unfolded proteins bind initially to DnaJ; upon interaction with the DnaJ-bound protein, DnaK hydrolyzes its bound ATP, resulting in the formation of a stable complex. GrpE releases ADP from DnaK; ATP binding to DnaK triggers the release of the substrate protein, thus completing the reaction cycle. Several rounds of ATP-dependent interactions between DnaJ, DnaK and GrpE are required for fully efficient folding. This is Protein GrpE from Psychromonas ingrahamii (strain DSM 17664 / CCUG 51855 / 37).